A 304-amino-acid polypeptide reads, in one-letter code: Ornithine carbamoyltransferase (304 aa).

Residues 51–54 (STRT), glutamine 78, arginine 102, and 129–132 (HPVQ) each bind carbamoyl phosphate. Residues asparagine 157, aspartate 221, and 225 to 226 (SM) each bind L-ornithine. Carbamoyl phosphate-binding positions include 261 to 262 (CL) and arginine 289.

Belongs to the aspartate/ornithine carbamoyltransferase superfamily. OTCase family.

The protein resides in the cytoplasm. It catalyses the reaction carbamoyl phosphate + L-ornithine = L-citrulline + phosphate + H(+). Its pathway is amino-acid degradation; L-arginine degradation via ADI pathway; carbamoyl phosphate from L-arginine: step 2/2. Functionally, reversibly catalyzes the transfer of the carbamoyl group from carbamoyl phosphate (CP) to the N(epsilon) atom of ornithine (ORN) to produce L-citrulline. This Campylobacter curvus (strain 525.92) protein is Ornithine carbamoyltransferase.